The chain runs to 553 residues: Capsid protein VP1 (553 aa).

This sequence belongs to the microviridae F protein family.

Its subcellular location is the virion. The protein resides in the host cytoplasm. In terms of biological role, assembles to form an icosahedral capsid with a T=1 symmetry. The protein is Capsid protein VP1 of Spiroplasma virus 4 (SpV4).